Reading from the N-terminus, the 555-residue chain is Formate--tetrahydrofolate ligase (555 aa).

Residue 65-72 (TPAGEGKS) participates in ATP binding.

This sequence belongs to the formate--tetrahydrofolate ligase family.

The enzyme catalyses (6S)-5,6,7,8-tetrahydrofolate + formate + ATP = (6R)-10-formyltetrahydrofolate + ADP + phosphate. It participates in one-carbon metabolism; tetrahydrofolate interconversion. The sequence is that of Formate--tetrahydrofolate ligase from Lactococcus lactis subsp. lactis (strain IL1403) (Streptococcus lactis).